The following is a 1484-amino-acid chain: Ral GTPase-activating protein subunit beta (1484 aa).

Disordered regions lie at residues 355 to 437 and 699 to 728; these read PRSD…APRR and ENNL…PDSE. Phosphoserine is present on Ser-359. Thr-363 and Thr-379 each carry phosphothreonine. Composition is skewed to polar residues over residues 369–381, 392–428, and 701–725; these read SMPQ…TTPP, NKAT…TSSE, and NLKS…PTTP. Phosphoserine is present on residues Ser-421 and Ser-710. Thr-724 is subject to Phosphothreonine. Residues 1138–1382 form the Rap-GAP domain; it reads IGYLDLLPCR…TTLEKEVPVI (245 aa). Ser-1275 carries the phosphoserine modification. Residues 1297-1325 are disordered; sequence PNHTDSLNSSQRLSPSSRMKKLPQGRPVP. Positions 1302-1313 are enriched in low complexity; sequence SLNSSQRLSPSS.

In terms of assembly, component of the heterodimeric RalGAP1 complex with RALGAPA1 and of the heterodimeric RalGAP2 complex with RALGAPA2. Heterodimerization is required for activity. As to expression, abundantly expressed in testis, pancreas, lung, thymus, brown fat, and white fat. Expressed at lower levels in the brain.

Functionally, non-catalytic subunit of the heterodimeric RalGAP1 and RalGAP2 complexes which act as GTPase activators for the Ras-like small GTPases RALA and RALB. The protein is Ral GTPase-activating protein subunit beta (Ralgapb) of Mus musculus (Mouse).